Reading from the N-terminus, the 93-residue chain is Integration host factor subunit beta (93 aa).

Belongs to the bacterial histone-like protein family. Heterodimer of an alpha and a beta chain.

In terms of biological role, this protein is one of the two subunits of integration host factor, a specific DNA-binding protein that functions in genetic recombination as well as in transcriptional and translational control. The protein is Integration host factor subunit beta of Idiomarina loihiensis (strain ATCC BAA-735 / DSM 15497 / L2-TR).